We begin with the raw amino-acid sequence, 518 residues long: Protein nucleotidyltransferase YdiU (518 aa).

The disordered stretch occupies residues 1–22; that stretch reads MTHLQFDNRLRAELPGDPEEGP. The ATP site is built by Gly100, Gly102, Arg103, Lys123, Asp135, Gly136, Arg193, and Arg200. The active-site Proton acceptor is Asp270. Mg(2+) is bound by residues Asn271 and Asp280. Asp280 is a binding site for ATP.

It belongs to the SELO family. It depends on Mg(2+) as a cofactor. The cofactor is Mn(2+).

It carries out the reaction L-seryl-[protein] + ATP = 3-O-(5'-adenylyl)-L-seryl-[protein] + diphosphate. The catalysed reaction is L-threonyl-[protein] + ATP = 3-O-(5'-adenylyl)-L-threonyl-[protein] + diphosphate. The enzyme catalyses L-tyrosyl-[protein] + ATP = O-(5'-adenylyl)-L-tyrosyl-[protein] + diphosphate. It catalyses the reaction L-histidyl-[protein] + UTP = N(tele)-(5'-uridylyl)-L-histidyl-[protein] + diphosphate. It carries out the reaction L-seryl-[protein] + UTP = O-(5'-uridylyl)-L-seryl-[protein] + diphosphate. The catalysed reaction is L-tyrosyl-[protein] + UTP = O-(5'-uridylyl)-L-tyrosyl-[protein] + diphosphate. Nucleotidyltransferase involved in the post-translational modification of proteins. It can catalyze the addition of adenosine monophosphate (AMP) or uridine monophosphate (UMP) to a protein, resulting in modifications known as AMPylation and UMPylation. In Xanthomonas campestris pv. campestris (strain 8004), this protein is Protein nucleotidyltransferase YdiU.